Consider the following 528-residue polypeptide: (R)-citramalate synthase (528 aa).

Positions 5 to 271 (VYIYDTTLRD…IPQENLKKLT (267 aa)) constitute a Pyruvate carboxyltransferase domain.

This sequence belongs to the alpha-IPM synthase/homocitrate synthase family.

It catalyses the reaction pyruvate + acetyl-CoA + H2O = (3R)-citramalate + CoA + H(+). Its pathway is amino-acid biosynthesis; L-isoleucine biosynthesis; 2-oxobutanoate from pyruvate: step 1/3. Its function is as follows. Catalyzes the condensation of pyruvate and acetyl-coenzyme A to form (R)-citramalate. The protein is (R)-citramalate synthase of Aquifex aeolicus (strain VF5).